The sequence spans 81 residues: Large ribosomal subunit protein bL27 (81 aa).

The span at 1–11 (MATSKSGGSSK) shows a compositional bias: polar residues. The disordered stretch occupies residues 1 to 26 (MATSKSGGSSKNGRDSISKRLGVKRS).

The protein belongs to the bacterial ribosomal protein bL27 family.

The polypeptide is Large ribosomal subunit protein bL27 (Borrelia turicatae (strain 91E135)).